Reading from the N-terminus, the 157-residue chain is MSDKPAYLTRDGRARLEAELEELVTKGRKEIAERINAAKELGDISESGEYEDAKNQQAHLEGRIREIKSILARAQIIDEENGSNHEVRIGSRVTVRIDGEHEEETWTIVGSTEAKPSEGKISNESPIGAALLGKRPSQQVTVETPSGTMKLTILNIQ.

Positions 13 to 75 (RARLEAELEE…EIKSILARAQ (63 aa)) form a coiled coil.

The protein belongs to the GreA/GreB family.

Functionally, necessary for efficient RNA polymerase transcription elongation past template-encoded arresting sites. The arresting sites in DNA have the property of trapping a certain fraction of elongating RNA polymerases that pass through, resulting in locked ternary complexes. Cleavage of the nascent transcript by cleavage factors such as GreA or GreB allows the resumption of elongation from the new 3'terminus. GreA releases sequences of 2 to 3 nucleotides. The chain is Transcription elongation factor GreA from Roseiflexus castenholzii (strain DSM 13941 / HLO8).